The primary structure comprises 153 residues: Aspartate carbamoyltransferase regulatory chain (153 aa).

Zn(2+) contacts are provided by cysteine 109, cysteine 114, cysteine 138, and cysteine 141.

It belongs to the PyrI family. In terms of assembly, contains catalytic and regulatory chains. Zn(2+) serves as cofactor.

In terms of biological role, involved in allosteric regulation of aspartate carbamoyltransferase. The polypeptide is Aspartate carbamoyltransferase regulatory chain (Salmonella newport (strain SL254)).